A 179-amino-acid polypeptide reads, in one-letter code: Lebocin-4 (179 aa).

Positions 1-16 (MYKFLVFSSVLVLFFA) are cleaved as a signal peptide. A propeptide spanning residues 17-120 (QASCQRFIQP…RPIESHRNTR (104 aa)) is cleaved from the precursor. O-linked (GalNAc...) threonine glycosylation is present at threonine 135. Positions 153 to 179 (RRHASDDQEELRHHNEHFLIPRDILQD) are excised as a propeptide.

It belongs to the lebocin family. O-glycosylation is important for the antibacterial activity of lebocin. As to expression, hemolymph. Produced in fat body.

It is found in the secreted. In terms of biological role, antibacterial peptide. This Bombyx mori (Silk moth) protein is Lebocin-4 (LEB4).